We begin with the raw amino-acid sequence, 431 residues long: Keratin, type I cytoskeletal 20 (431 aa).

A disordered region spans residues 1-23 (MDFSRQSFHRSLSSSSQGPALSM). The tract at residues 1–76 (MDFSRQSFHR…SNGSDLFGGN (76 aa)) is head. Ser13 carries the post-translational modification Phosphoserine; by MAPKAPK2, MAPKAPK3 and PKC. Phosphoserine is present on residues Ser16 and Ser26. A coil 1A region spans residues 77–112 (GKLAMQNLNDRLANYLEKVRSLEQSNSRLEAQIKQW). The region spanning 77–388 (GKLAMQNLND…RLLEGEDIKT (312 aa)) is the IF rod domain. Positions 113–130 (YETNAPSTIRDYSSYYAQ) are linker 1. Positions 131–222 (IKELQNQVKD…KEHQEEVEVL (92 aa)) are coil 1B. Positions 223–245 (RRQLGNNVNVEVDAAPGLNLGEI) are linker 12. Residues 246–384 (MNEMRQRYEV…ATYRRLLEGE (139 aa)) are coil 2. Residues 385 to 431 (DIKTTEYQLSTLEMKDIKKTRKIKTVVEEVVDGKVVSSEVKEIEESV) form a tail region.

The protein belongs to the intermediate filament family. Heterotetramer of two type I and two type II keratins. Associates with KRT8. In terms of processing, hyperphosphorylation at Ser-13 occurs during the early stages of apoptosis but becomes less prominent during the later stages. Phosphorylation at Ser-13 also increases in response to stress brought on by cell injury. Post-translationally, proteolytically cleaved by caspases during apoptosis. Cleavage occurs at Asp-235. In terms of tissue distribution, expressed at low levels in the more differentiated suprabasal regions of the small intestine, and at higher levels in the colon, mainly in the upper region and in scattered cells throughout the remaining epithelium. Also expressed in epithelial cells of bladder, ileum and stomach and at lower levels in pancreas and earskin. The phosphorylated form is nearly exclusively expressed in goblet cells of the small intestine and in the lumen-proximal cells of the colon (at protein level). Also expressed in jejunum and duodenum.

Its function is as follows. Plays a significant role in maintaining keratin filament organization in intestinal epithelia. When phosphorylated, plays a role in the secretion of mucin in the small intestine. This is Keratin, type I cytoskeletal 20 from Mus musculus (Mouse).